Consider the following 595-residue polypeptide: UvrABC system protein C (595 aa).

Residues 14 to 91 (DSPGCYIHKD…IQENKPKYNI (78 aa)) form the GIY-YIG domain. Positions 196 to 231 (DKIVNELRDKMTKASELMEFERAAEYRDLIEGIGLL) constitute a UVR domain.

This sequence belongs to the UvrC family. As to quaternary structure, interacts with UvrB in an incision complex.

The protein localises to the cytoplasm. Functionally, the UvrABC repair system catalyzes the recognition and processing of DNA lesions. UvrC both incises the 5' and 3' sides of the lesion. The N-terminal half is responsible for the 3' incision and the C-terminal half is responsible for the 5' incision. This is UvrABC system protein C from Streptococcus mutans serotype c (strain ATCC 700610 / UA159).